Here is a 979-residue protein sequence, read N- to C-terminus: Chromosome partition protein Smc (979 aa).

An ATP-binding site is contributed by 33–40 (PNGSGKSN). A coiled-coil region spans residues 169 to 400 (SKYKLDKEEA…INILKQQFEN (232 aa)). Residues 419–538 (DGYIGLASEL…DNVDNANRIA (120 aa)) form the SMC hinge domain. Coiled coils occupy residues 572 to 716 (ILNY…HSDS) and 750 to 818 (SLDL…DKII).

This sequence belongs to the SMC family. As to quaternary structure, homodimer.

It is found in the cytoplasm. Required for chromosome condensation and partitioning. The chain is Chromosome partition protein Smc from Mesomycoplasma hyorhinis (Mycoplasma hyorhinis).